Here is a 483-residue protein sequence, read N- to C-terminus: Protein nucleotidyltransferase YdiU (483 aa).

ATP-binding residues include G81, G83, R84, K103, D115, G116, R166, and R173. The active-site Proton acceptor is the D244. The Mg(2+) site is built by N245 and D254. D254 is a binding site for ATP.

This sequence belongs to the SELO family. Requires Mg(2+) as cofactor. The cofactor is Mn(2+).

The catalysed reaction is L-seryl-[protein] + ATP = 3-O-(5'-adenylyl)-L-seryl-[protein] + diphosphate. The enzyme catalyses L-threonyl-[protein] + ATP = 3-O-(5'-adenylyl)-L-threonyl-[protein] + diphosphate. It catalyses the reaction L-tyrosyl-[protein] + ATP = O-(5'-adenylyl)-L-tyrosyl-[protein] + diphosphate. It carries out the reaction L-histidyl-[protein] + UTP = N(tele)-(5'-uridylyl)-L-histidyl-[protein] + diphosphate. The catalysed reaction is L-seryl-[protein] + UTP = O-(5'-uridylyl)-L-seryl-[protein] + diphosphate. The enzyme catalyses L-tyrosyl-[protein] + UTP = O-(5'-uridylyl)-L-tyrosyl-[protein] + diphosphate. Nucleotidyltransferase involved in the post-translational modification of proteins. It can catalyze the addition of adenosine monophosphate (AMP) or uridine monophosphate (UMP) to a protein, resulting in modifications known as AMPylation and UMPylation. In Shewanella pealeana (strain ATCC 700345 / ANG-SQ1), this protein is Protein nucleotidyltransferase YdiU.